A 414-amino-acid chain; its full sequence is MATQRASGLLQRLAQGSLVKQILVGLVLGILLAWISKPAAEAVGLLGTLFVGALKAVAPVLVLMLVMASIANHQHGQKTNIRPILFLYLLGTFSAALAAVVFSFAFPSTLHLSSSAQDIVPPSGIVEVLRGLLMSMVSNPIDALLNANYIGILVWAVGLGFALRHGNETTKNLVNDMSNAVTFMVKLVIRFAPVGIFGLVSSTLATTGFSTLWGYAHLLVVLIGCMLLVALVVNPLLVFWKIRRNPYPLVFACLRESGVYAFFTRSSAANIPVNMALCEKLNLDRDTYSVSIPLGATINMAGAAITITVLTLAAVHTLGVPVDLPTALLLSVVASLCACGASGVAGGSLLLIPLACNMFGIPNDIAMQVVAVGFIIGVLQDSCETALNSSTDVLFTAAACQAEDERLANNALRS.

The next 8 membrane-spanning stretches (helical) occupy residues 16-36 (GSLV…AWIS), 46-66 (LGTL…LMLV), 84-104 (ILFL…VFSF), 143-163 (ALLN…GFAL), 180-200 (AVTF…FGLV), 219-239 (LVVL…LLVF), 300-320 (MAGA…TLGV), and 332-352 (VVAS…LLLI).

The protein belongs to the dicarboxylate/amino acid:cation symporter (DAACS) (TC 2.A.23) family.

Its subcellular location is the cell inner membrane. The enzyme catalyses L-serine(in) + Na(+)(in) = L-serine(out) + Na(+)(out). It carries out the reaction L-threonine(in) + Na(+)(in) = L-threonine(out) + Na(+)(out). Functionally, involved in the import of serine and threonine into the cell, with the concomitant import of sodium (symport system). This is Serine/threonine transporter SstT from Salmonella newport (strain SL254).